The primary structure comprises 634 residues: Factor of DNA methylation 1 (634 aa).

Residues 288 to 469 adopt a coiled-coil conformation; the sequence is LDEKKNLHQA…LESMNSVLMT (182 aa). Positions 349–364 are enriched in basic and acidic residues; it reads ELDRQKLDEDKRKSDA. The interval 349–375 is disordered; that stretch reads ELDRQKLDEDKRKSDAMNKSLQLASRE.

Homodimer. Interacts with IDN2 and AGO4. Forms a complex with IDN2 and FMD2/INDL2. Highly expressed in flowers and at lower levels in roots, leaves and stems.

Functionally, forms a complex with IDN2 and FDM2/IDNL2 that is required for RNA-directed DNA methylation (RdDM) and that functions at a downstream step of the RdDM pathway. Required for de novo DNA methylation and 24 nucleotide small interfering RNA (siRNA) accumulation. Binds unmethylated but not methylated DNAs through its coiled-coil domain. May bind double-stranded RNAs (dsRNAs) with 5'-overhangs through its XS domain. However, according to, FMD1 does not bind dsRNAs. This is Factor of DNA methylation 1 from Arabidopsis thaliana (Mouse-ear cress).